A 168-amino-acid chain; its full sequence is Lipoprotein signal peptidase (168 aa).

A run of 4 helical transmembrane segments spans residues 15–35 (WLWLALVVFLADIGIKFIVME), 47–67 (VLPFFNLLYVHNYGAAFSFLS), 75–95 (WLFTGIAFVVTGLLTYWMSKL), and 107–127 (AMIIGGAIGNVFDRMVHGFVV). Residues aspartate 128 and aspartate 146 contribute to the active site. Residues 141-161 (AFNLADTAICLGAAMIILDGF) form a helical membrane-spanning segment.

It belongs to the peptidase A8 family.

The protein resides in the cell inner membrane. It catalyses the reaction Release of signal peptides from bacterial membrane prolipoproteins. Hydrolyzes -Xaa-Yaa-Zaa-|-(S,diacylglyceryl)Cys-, in which Xaa is hydrophobic (preferably Leu), and Yaa (Ala or Ser) and Zaa (Gly or Ala) have small, neutral side chains.. It functions in the pathway protein modification; lipoprotein biosynthesis (signal peptide cleavage). Its function is as follows. This protein specifically catalyzes the removal of signal peptides from prolipoproteins. The chain is Lipoprotein signal peptidase from Vibrio vulnificus (strain CMCP6).